The chain runs to 2290 residues: MKGHQFKSWIFELREIVREIKNSHYFLDSWTQFNSVGSFIHIFFHQERFRKLLDPRIFSILLLRNSQGSTSNRYFTIKGVVLFVVAALLYRINNRNLVESKNLYLKGLLPIPMNSIGPRNDTSEESFGSSNINRLIVSLLYLTKGKKISESCFRDPKESTWVLPITKKCIMPESNWSSRWWRNWIGKKRDFCCKISNETVAGIDISFKEKDIKYLEFLFVYYMDDPIRKGHDWELFNRLSPSKRRNIINLNSGQLFEILVKDWICYLMFAFREKIPLEVEGFFKQQGAGSTIQSNDIEHVSHLFSRNKWAISLQNCAQFHMWQFHQDLFVSWGKNPHESDFLRKISRENWIWLDNVWLVNKDRFFSKVRNVSSNIQYDSTRSSFVQVTDSSQLNGSSDQFIDPFDSISNEDSEYHYHTLINQREIQQLKERSILWDPSFIQTEGREIESDRFPKYLSGYSSMPRLFTEREKRMNNHLLPEESEEFLGNSTRAIRSFFSDRWSELHLGSNPTERSTRDQKLLKKEQDVSFVPSRRSENQEIVNIFKIITYLQNTVSIHPISSDLGCDMVPKDELDMDSSNKISFLNKNPFFDLFHLFHERKRGGYTLRHDFESEERFQEMADLFTLSITEPDLVYHKGFAFSIDSYGLDQRQFLKEGFNSRDESKKKSLLVLPPIFSEENESFYRRIRKNWVRISCGNYLEDPKRVVFASNNIMEAVNQYRLIRNLIQIQFQYSPYGYIRNVLNRFFLMKRPDRNFEYGIQRDLIGNDTLNHRTIMKDTINQHLSNLKKSQKKWFDPLIFLSRTERSINRDPNAYRYKWSNGSKNFQEHLEHFVSERKSRFQVVFDRLCINQYSIDWSEVIDKKDLSKSLRFFLSKLLRFFLSKLLLFLSKLLLFLSNSLPFFFVSFENIPIHRSEIHIYELKGPNDQLCNQLLESIGLQIVHLKKLKPFLLDDHNTSQKSKFLINGGTISPFLFNKIPKWMIDSFHTRKNRRKSFDNTDSYFSIVSHDQDNWLNPVKPFQRSSLISSFSKANRLRFLNNPHHFCFYCNKRFPFYVEKARLNNSDFTYGQFLTILFLHNKIFSSCGGKKKHAFLERDTISPSSIESQVSNIFISNDFPQSGDERYNLYKSFHFPIRSDPLVRRAIYSIAAISGTPLIEGQRVNFERTYCQTLSDMNLSDSEEKSLHQYLNFNSNMGLIHTPCSEKYLQRKKRSLCLKKCVDKGQMDRTFQRDSAFSTLSKLNLFQTYMPWFFTSTGYKYLNLIFLDTFSDLLRILSSSQKFVSIFHDIMHGLDISWRILQKKLCLPQRNLISEISSKSLHNILLSEEMIHRNNESSLISTHLRSPNVREVLYSILFLLLVAGYIVRTHLLFVSRAYSELQTEFEKIKSLMIPSYMIELRKLLDRYPTSELNSFWLKNLFLVSLEQLGDCLEEIRGSGGNILRGGDPAYGVKSIRSKKKDLKINFIDIISIIPNPINQITFSRNTRHLSHTSKEIYSVIRKRKNVSGDWIDDKIESWVANSDSIDDKEREFLVQFSTLRAEKRIDQILLSLTHSDHLSKNDSGYQMIEQPGTIYLRYLVDIHKKYLMNYEFNTSCLAERRIFLAHYQTITYSQTSCGANSFHFPSHGKPFSLRLALSPSRSILVIGSIGTGRSYLVKYLATNSYVPFITVFLNKFLDNKPKGFFIDDIDIDDSDDIDASNDIDRELDTELELLTMMNALTMDMMSEIDLFYITLQFELAKAMSPCIIWIPNIHDLDVNESNYLALGLLVNSLSRDCERCSTRNILVIASTHIPQKVDPALIAPNKLNTCIKIRRLLIPQQRKHFFTLSYTRGFHLEKKMFHTNGFESITMGSSARDLVALTNEALSISITQKKSIIDTNTIRSALHRQTWDLRSQVRSVQDHGILFYQIGRAVAQNVLISNCPIDPISIYRKKKSCNEGDSYLYKWYFELRTSMKKFTILLYLLSCSAGSVAQDLWSLPGPDEKNRITSYGFIENDSDLVHGLLEVQGALVGSSRTEKDCSQFDNDRVTLLFRSEPRDPLYMMQDGSCSIVDQRFLYEKYESEFEEGEGEGVLDPQQIEEDLFNHIVWAPRIWRPRGFLFDCIERPNELGFPYLAGSFRGKRIIYDEKYELQENDSEFLQSGTMQYQRRDRSSKEQGFFRISQFIWDPADPLFFLFKDQPFVSVFSHREFFADEEMSKGLLTSQTDPPTSIYKRWFIKNTQEKHFELLIQRQRWLRTNSSLSNGFFRSNTRSESYQYLSNLFLSNGTLLDRMTKTLLKKRWLFPDEMKIGFM.

1644–1651 contributes to the ATP binding site; it reads GSIGTGRS.

Belongs to the Ycf2 family.

Its subcellular location is the plastid. It localises to the chloroplast stroma. In terms of biological role, probable ATPase of unknown function. Its presence in a non-photosynthetic plant (Epifagus virginiana) and experiments in tobacco indicate that it has an essential function which is probably not related to photosynthesis. In Nasturtium officinale (Watercress), this protein is Protein Ycf2.